Here is a 130-residue protein sequence, read N- to C-terminus: Small ribosomal subunit protein uS9 (130 aa).

Residues 109 to 130 (RKKERKKYGQRAARARFQYSKR) form a disordered region.

The protein belongs to the universal ribosomal protein uS9 family.

This is Small ribosomal subunit protein uS9 from Oleidesulfovibrio alaskensis (strain ATCC BAA-1058 / DSM 17464 / G20) (Desulfovibrio alaskensis).